We begin with the raw amino-acid sequence, 251 residues long: Developmental protein SEPALLATA 1 (251 aa).

The MADS-box domain maps to 3–57 (RGRVELKRIENKINRQVTFAKRRNGLLKKAYELSVLCDAEVALIIFSNRGKLYEF). Residues 85 to 176 (AKELENSYRE…ALAMKLDDMI (92 aa)) adopt a coiled-coil conformation. The K-box domain occupies 88-178 (LENSYREYLK…AMKLDDMIGV (91 aa)).

Heterodimer with AGAMOUS capable of binding to CArG-box sequences. Interacts with AGL16. Interacts with TT16/AGL32. In terms of tissue distribution, expressed mainly in carpels, and weakly in stamens.

The protein resides in the nucleus. Functionally, probable transcription factor. Functions with SEPALLATA2/AGL4 and SEPALLATA3/AGL9 to ensure proper development of petals, stamens and carpels, and to prevent the indeterminate growth of the flower meristem. Forms a heterodimer via the K-box domain with AGAMOUS, that could be involved in genes regulation during floral meristem development. The polypeptide is Developmental protein SEPALLATA 1 (SEP1) (Arabidopsis thaliana (Mouse-ear cress)).